Here is a 284-residue protein sequence, read N- to C-terminus: Phosphatidylglycerol--prolipoprotein diacylglyceryl transferase (284 aa).

A run of 7 helical transmembrane segments spans residues 19 to 39 (ISFYWYGMMYVLSFIFAMWFL), 60 to 80 (LLYLNFLGVVIGGRIGYVLFY), 98 to 118 (GGMSFHGGLIGVIISIMWFSY), 130 to 150 (FIVPAVPVGLGLGRLGNFING), 199 to 219 (QLYEMILEGIVLFVVIYIFSC), 225 to 245 (GSISGLFLLLYGLFRIIIEFF), and 258 to 278 (FITLGQVLSFPMVIFGFIIMY). R143 is a binding site for a 1,2-diacyl-sn-glycero-3-phospho-(1'-sn-glycerol).

This sequence belongs to the Lgt family.

The protein localises to the cell inner membrane. It catalyses the reaction L-cysteinyl-[prolipoprotein] + a 1,2-diacyl-sn-glycero-3-phospho-(1'-sn-glycerol) = an S-1,2-diacyl-sn-glyceryl-L-cysteinyl-[prolipoprotein] + sn-glycerol 1-phosphate + H(+). The protein operates within protein modification; lipoprotein biosynthesis (diacylglyceryl transfer). Its function is as follows. Catalyzes the transfer of the diacylglyceryl group from phosphatidylglycerol to the sulfhydryl group of the N-terminal cysteine of a prolipoprotein, the first step in the formation of mature lipoproteins. The sequence is that of Phosphatidylglycerol--prolipoprotein diacylglyceryl transferase from Blochmanniella floridana.